A 737-amino-acid chain; its full sequence is Prospero homeobox protein 1 (737 aa).

The segment at 1-28 is interaction with RORG; the sequence is MPDHDSTALLSRQTKRRRVDIGVKRTVG. Polar residues predominate over residues 103–135; the sequence is KNGGTEPSFQASGLSSTGSEVHQEDICSNSSRD. The tract at residues 103–147 is disordered; sequence KNGGTEPSFQASGLSSTGSEVHQEDICSNSSRDSPPECLSPFGRP. Phosphoserine is present on residues serine 177, serine 179, serine 199, serine 291, and serine 295. Positions 178–221 are disordered; it reads HSPSVALRGNENEREMAPQSVSPRESYRENKRKQKLPQQQQQSF. The segment covering 320–337 has biased composition (basic and acidic residues); sequence MAENKPKREGSNKERDHG. Disordered stretches follow at residues 320-344 and 444-476; these read MAENKPKREGSNKERDHGPNSLQPE and RKNSSEQSASGPATGGHHQPLHQSPLSATAGFT. Lysine 324 is covalently cross-linked (Glycyl lysine isopeptide (Lys-Gly) (interchain with G-Cter in SUMO2)). The segment covering 464–476 has biased composition (polar residues); sequence LHQSPLSATAGFT. 2 positions are modified to phosphoserine: serine 511 and serine 514. The disordered stretch occupies residues 525 to 547; sequence RTKMSSHHLSHHPCSPAHPPSTA. A Phosphoserine modification is found at serine 557. One can recognise a Prospero-type homeo domain in the interval 577–635; that stretch reads QEGLSPNHLKKAKLMFFYTRYPSSNMLKTYFSDVKFNRCITSQLIKWFSNFREFYYIQM. The tract at residues 577-735 is homeo-Prospero; sequence QEGLSPNHLK…KSPNCLQELL (159 aa). One can recognise a Prospero domain in the interval 636–735; sequence EKYARQAIND…KSPNCLQELL (100 aa). The interval 723-729 is essential for nuclear localization, interaction with RORG, repression of RORG transcriptional activator activity; the sequence is EIFKSPN.

The protein belongs to the Prospero homeodomain family. In terms of assembly, interacts with RORA and RORG (via AF-2 motif). In terms of tissue distribution, expressed in the young neurons of the subventricular region of the CNS, developing eye lens and pancreas. It is also found in the developing liver, heart and skeletal muscle. In the eye, expressed in the lens and retina at postnatal day 10. In the retina, localized to the inner nuclear layer. In the lens, localized to epithelial and fiber cells.

Its subcellular location is the nucleus. Functionally, transcription factor involved in developmental processes such as cell fate determination, gene transcriptional regulation and progenitor cell regulation in a number of organs. Plays a critical role in embryonic development and functions as a key regulatory protein in neurogenesis and the development of the heart, eye lens, liver, pancreas and the lymphatic system. Involved in the regulation of the circadian rhythm. Represses: transcription of the retinoid-related orphan receptor RORG, transcriptional activator activity of RORA and RORG and the expression of RORA/G-target genes including core clock components: BMAL1, NPAS2 and CRY1 and metabolic genes: AVPR1A and ELOVL3. The protein is Prospero homeobox protein 1 (Prox1) of Mus musculus (Mouse).